The primary structure comprises 61 residues: Small ribosomal subunit protein uS14 (61 aa).

Zn(2+) is bound by residues Cys24, Cys27, Cys40, and Cys43.

This sequence belongs to the universal ribosomal protein uS14 family. Zinc-binding uS14 subfamily. Part of the 30S ribosomal subunit. Contacts proteins S3 and S10. Requires Zn(2+) as cofactor.

Binds 16S rRNA, required for the assembly of 30S particles and may also be responsible for determining the conformation of the 16S rRNA at the A site. In Mycoplasma genitalium (strain ATCC 33530 / DSM 19775 / NCTC 10195 / G37) (Mycoplasmoides genitalium), this protein is Small ribosomal subunit protein uS14.